The primary structure comprises 311 residues: Malate dehydrogenase (311 aa).

Residues 7-13 (GAAGGIG) and aspartate 34 contribute to the NAD(+) site. Substrate is bound by residues arginine 81 and arginine 87. NAD(+) contacts are provided by residues asparagine 94 and 117 to 119 (ITN). Residues asparagine 119 and arginine 153 each contribute to the substrate site. Histidine 177 serves as the catalytic Proton acceptor. Residue methionine 227 coordinates NAD(+).

This sequence belongs to the LDH/MDH superfamily. MDH type 1 family. Homodimer.

The catalysed reaction is (S)-malate + NAD(+) = oxaloacetate + NADH + H(+). Catalyzes the reversible oxidation of malate to oxaloacetate. The polypeptide is Malate dehydrogenase (Shewanella loihica (strain ATCC BAA-1088 / PV-4)).